The primary structure comprises 386 residues: Small ribosomal subunit protein mS31 (386 aa).

It belongs to the mitochondrion-specific ribosomal protein mS31 family. In terms of assembly, component of the mitochondrial ribosome small subunit (28S) which comprises a 12S rRNA and about 30 distinct proteins.

It localises to the mitochondrion. This chain is Small ribosomal subunit protein mS31 (MRPS31), found in Bos taurus (Bovine).